Consider the following 284-residue polypeptide: RNase adapter protein RapZ (284 aa).

8–15 (GRSGSGKS) lines the ATP pocket. 56–59 (DVRN) contributes to the GTP binding site. Residues 266–284 (RSRGKNVQSRHRTLEKRKQ) form an RNA-binding region.

This sequence belongs to the RapZ-like family. RapZ subfamily. In terms of assembly, homotrimer.

Functionally, modulates the synthesis of GlmS, by affecting the processing and stability of the regulatory small RNA GlmZ. When glucosamine-6-phosphate (GlcN6P) concentrations are high in the cell, RapZ binds GlmZ and targets it to cleavage by RNase E. Consequently, GlmZ is inactivated and unable to activate GlmS synthesis. Under low GlcN6P concentrations, RapZ is sequestered and inactivated by an other regulatory small RNA, GlmY, preventing GlmZ degradation and leading to synthesis of GlmS. The protein is RNase adapter protein RapZ of Serratia proteamaculans (strain 568).